Here is a 122-residue protein sequence, read N- to C-terminus: Large ribosomal subunit protein uL14 (122 aa).

The protein belongs to the universal ribosomal protein uL14 family. Part of the 50S ribosomal subunit. Forms a cluster with proteins L3 and L19. In the 70S ribosome, L14 and L19 interact and together make contacts with the 16S rRNA in bridges B5 and B8.

Its function is as follows. Binds to 23S rRNA. Forms part of two intersubunit bridges in the 70S ribosome. In Nitrosomonas eutropha (strain DSM 101675 / C91 / Nm57), this protein is Large ribosomal subunit protein uL14.